We begin with the raw amino-acid sequence, 93 residues long: NADH-ubiquinone oxidoreductase chain 4L (93 aa).

The next 3 helical transmembrane spans lie at 1–21, 29–49, and 54–74; these read MVWM…VIFR, LFVG…VFLM, and LILL…ALLV.

The protein belongs to the complex I subunit 4L family.

The protein resides in the mitochondrion membrane. The catalysed reaction is a ubiquinone + NADH + 5 H(+)(in) = a ubiquinol + NAD(+) + 4 H(+)(out). In terms of biological role, core subunit of the mitochondrial membrane respiratory chain NADH dehydrogenase (Complex I) that is believed to belong to the minimal assembly required for catalysis. Complex I functions in the transfer of electrons from NADH to the respiratory chain. The immediate electron acceptor for the enzyme is believed to be ubiquinone. The sequence is that of NADH-ubiquinone oxidoreductase chain 4L (ND4L) from Mytilus edulis (Blue mussel).